Reading from the N-terminus, the 338-residue chain is Holliday junction branch migration complex subunit RuvB (338 aa).

Residues 4–186 (ADRLIAPDNP…FGITQRLEYY (183 aa)) form a large ATPase domain (RuvB-L) region. Residues Ile25, Arg26, Gly67, Lys70, Thr71, Thr72, 133-135 (EDY), Arg176, Tyr186, and Arg223 each bind ATP. Thr71 contributes to the Mg(2+) binding site. The tract at residues 187–257 (KVEDLQNIVQ…VADKALNMLD (71 aa)) is small ATPAse domain (RuvB-S). Positions 260–338 (AKGFDYMDRK…HFGIDKPSNR (79 aa)) are head domain (RuvB-H). 3 residues coordinate DNA: Arg296, Arg315, and Arg320.

This sequence belongs to the RuvB family. Homohexamer. Forms an RuvA(8)-RuvB(12)-Holliday junction (HJ) complex. HJ DNA is sandwiched between 2 RuvA tetramers; dsDNA enters through RuvA and exits via RuvB. An RuvB hexamer assembles on each DNA strand where it exits the tetramer. Each RuvB hexamer is contacted by two RuvA subunits (via domain III) on 2 adjacent RuvB subunits; this complex drives branch migration. In the full resolvosome a probable DNA-RuvA(4)-RuvB(12)-RuvC(2) complex forms which resolves the HJ.

The protein localises to the cytoplasm. It carries out the reaction ATP + H2O = ADP + phosphate + H(+). Its function is as follows. The RuvA-RuvB-RuvC complex processes Holliday junction (HJ) DNA during genetic recombination and DNA repair, while the RuvA-RuvB complex plays an important role in the rescue of blocked DNA replication forks via replication fork reversal (RFR). RuvA specifically binds to HJ cruciform DNA, conferring on it an open structure. The RuvB hexamer acts as an ATP-dependent pump, pulling dsDNA into and through the RuvAB complex. RuvB forms 2 homohexamers on either side of HJ DNA bound by 1 or 2 RuvA tetramers; 4 subunits per hexamer contact DNA at a time. Coordinated motions by a converter formed by DNA-disengaged RuvB subunits stimulates ATP hydrolysis and nucleotide exchange. Immobilization of the converter enables RuvB to convert the ATP-contained energy into a lever motion, pulling 2 nucleotides of DNA out of the RuvA tetramer per ATP hydrolyzed, thus driving DNA branch migration. The RuvB motors rotate together with the DNA substrate, which together with the progressing nucleotide cycle form the mechanistic basis for DNA recombination by continuous HJ branch migration. Branch migration allows RuvC to scan DNA until it finds its consensus sequence, where it cleaves and resolves cruciform DNA. The protein is Holliday junction branch migration complex subunit RuvB of Vibrio atlanticus (strain LGP32) (Vibrio splendidus (strain Mel32)).